Reading from the N-terminus, the 627-residue chain is Monoterpene synthase like 1, chloroplastic (627 aa).

A chloroplast-targeting transit peptide spans 1–50 (MDLISVLPSTSKSCVCMHKPLSSSTHKLKPFCRTIRILGMPRPRKSVLMA). Mg(2+)-binding residues include Asp-378, Asp-382, and Asp-530. The DDXXD motif motif lies at 378–382 (DDMYD).

It belongs to the terpene synthase family. Tpsd subfamily. Mg(2+) is required as a cofactor. It depends on Mn(2+) as a cofactor.

Its subcellular location is the plastid. It localises to the chloroplast. It participates in terpene metabolism; oleoresin biosynthesis. The protein operates within secondary metabolite biosynthesis; terpenoid biosynthesis. Its function is as follows. Monoterpene synthase (TPS) involved in the biosynthesis of monoterpene natural products included in conifer oleoresin secretions and volatile emissions; these compounds contribute to biotic and abiotic stress defense against herbivores and pathogens. The chain is Monoterpene synthase like 1, chloroplastic from Pinus contorta (Shore pine).